The primary structure comprises 740 residues: Ion-translocating oxidoreductase complex subunit C (740 aa).

2 consecutive 4Fe-4S ferredoxin-type domains span residues 369–397 (GEPQ…QQLY) and 407–436 (KATT…VQYF). Positions 377, 380, 383, 387, 416, 419, 422, and 426 each coordinate [4Fe-4S] cluster. Disordered regions lie at residues 602–652 (KLEQ…DPRK), 664–685 (ARKL…PRKA), and 695–714 (KARK…QVDP). A compositionally biased stretch (low complexity) spans 605 to 615 (QQQANAEPEQQ).

It belongs to the 4Fe4S bacterial-type ferredoxin family. RnfC subfamily. As to quaternary structure, the complex is composed of six subunits: RsxA, RsxB, RsxC, RsxD, RsxE and RsxG. Requires [4Fe-4S] cluster as cofactor.

It is found in the cell inner membrane. Functionally, part of a membrane-bound complex that couples electron transfer with translocation of ions across the membrane. Required to maintain the reduced state of SoxR. This chain is Ion-translocating oxidoreductase complex subunit C, found in Escherichia coli O157:H7.